Here is a 261-residue protein sequence, read N- to C-terminus: Hemin import ATP-binding protein HmuV (261 aa).

The ABC transporter domain maps to 8 to 243 (IRVTDLSYSV…ESIRTAYGHE (236 aa)). Residue 40 to 47 (GRNGAGKS) participates in ATP binding.

Belongs to the ABC transporter superfamily. Heme (hemin) importer (TC 3.A.1.14.5) family. In terms of assembly, the complex is composed of two ATP-binding proteins (HmuV), two transmembrane proteins (HmuU) and a solute-binding protein (HmuT).

Its subcellular location is the cell membrane. In terms of biological role, part of the ABC transporter complex HmuTUV involved in hemin import. Responsible for energy coupling to the transport system. In Deinococcus radiodurans (strain ATCC 13939 / DSM 20539 / JCM 16871 / CCUG 27074 / LMG 4051 / NBRC 15346 / NCIMB 9279 / VKM B-1422 / R1), this protein is Hemin import ATP-binding protein HmuV.